A 251-amino-acid polypeptide reads, in one-letter code: 5-oxoprolinase subunit A (251 aa).

This sequence belongs to the LamB/PxpA family. Forms a complex composed of PxpA, PxpB and PxpC.

It catalyses the reaction 5-oxo-L-proline + ATP + 2 H2O = L-glutamate + ADP + phosphate + H(+). Catalyzes the cleavage of 5-oxoproline to form L-glutamate coupled to the hydrolysis of ATP to ADP and inorganic phosphate. The chain is 5-oxoprolinase subunit A from Paracidovorax citrulli (strain AAC00-1) (Acidovorax citrulli).